The chain runs to 127 residues: Fumarate reductase subunit C (127 aa).

Helical transmembrane passes span 30–50 (ATVLPLILFTLFLTFGLGSLV), 58–78 (GWLSFMANPIVVGINIVALLG), and 107–127 (IIVLTQWAAVAFISLIVLMVV).

The protein belongs to the FrdC family. As to quaternary structure, part of an enzyme complex containing four subunits: a flavoprotein (FrdA), an iron-sulfur protein (FrdB), and two hydrophobic anchor proteins (FrdC and FrdD).

The protein localises to the cell inner membrane. Its function is as follows. Anchors the catalytic components of the fumarate reductase complex to the cell membrane, binds quinones. The polypeptide is Fumarate reductase subunit C (Vibrio atlanticus (strain LGP32) (Vibrio splendidus (strain Mel32))).